We begin with the raw amino-acid sequence, 251 residues long: Flap endonuclease Xni (251 aa).

Residue Asp104 participates in Mg(2+) binding. Positions 160–249 (VLPRQLPDYW…IDGNLQQLRL (90 aa)) constitute a 5'-3' exonuclease domain. Leu171, Ala172, Pro180, Val182, and Ile185 together coordinate K(+). The interval 184–189 (GIGPKS) is interaction with DNA.

It belongs to the Xni family. Mg(2+) is required as a cofactor. It depends on K(+) as a cofactor.

Functionally, has flap endonuclease activity. During DNA replication, flap endonucleases cleave the 5'-overhanging flap structure that is generated by displacement synthesis when DNA polymerase encounters the 5'-end of a downstream Okazaki fragment. This is Flap endonuclease Xni from Salmonella heidelberg (strain SL476).